Consider the following 1120-residue polypeptide: ISWI chromatin-remodeling complex ATPase ISW2 (1120 aa).

Over residues 1–16 the composition is skewed to basic and acidic residues; sequence MTTQQEEQRSDTKNSK. 2 disordered regions span residues 1–58 and 129–153; these read MTTQ…VEDR and LSKS…EDAE. 2 positions are modified to phosphoserine: Ser-17 and Ser-19. Over residues 47-58 the composition is skewed to basic and acidic residues; sequence LSDKEIYTVEDR. Positions 196–361 constitute a Helicase ATP-binding domain; the sequence is ISLHENKLSG…WALLNFLLPD (166 aa). 209-216 is a binding site for ATP; it reads DEMGLGKT. The DEAH box motif lies at 312–315; sequence DEAH. The 152-residue stretch at 494–645 folds into the Helicase C-terminal domain; the sequence is ILDKLLKRLK…QLVIQQGTGK (152 aa). 2 disordered regions span residues 764–783 and 828–853; these read GGGS…PRAP and NEGS…KGHE. At Ser-831 the chain carries Phosphoserine. Residues 886–938 enclose the SANT domain; the sequence is KAFTNWNKRDFMAFINACAKYGRDDMENIKKSIDSKTPEEVEVYAKIFWERLK. The interval 1062 to 1120 is disordered; sequence PDANKKKRSRTSATREDTPLSQNESTRASTVPNLPTTMVTNQKDTNDHVDKRTKIDQEA. Thr-1079 bears the Phosphothreonine mark. The segment covering 1080-1104 has biased composition (polar residues); the sequence is PLSQNESTRASTVPNLPTTMVTNQK. Ser-1082 is modified (phosphoserine). The segment covering 1105-1120 has biased composition (basic and acidic residues); it reads DTNDHVDKRTKIDQEA.

Belongs to the SNF2/RAD54 helicase family. ISWI subfamily. Component of the ISW2 complex, which at least consists of ISW2, ITC1, DLS1 and DPB4. May form a stable subcomplex with ITC1.

It is found in the nucleus. Functionally, catalytic component of the ISW2 complex, which acts in remodeling the chromatin by catalyzing an ATP-dependent alteration in the structure of nucleosomal DNA. The ISW2 complex is involved in coordinating transcriptional repression and in inheritance of telomeric silencing. It is involved in repression of MAT a-specific genes, INO1, and early meiotic genes during mitotic growth dependent upon transcription factor UME6 and in a parallel pathway to the RPD3-SIN3 histone deacetylase complex. The polypeptide is ISWI chromatin-remodeling complex ATPase ISW2 (ISW2) (Saccharomyces cerevisiae (strain ATCC 204508 / S288c) (Baker's yeast)).